Reading from the N-terminus, the 170-residue chain is Large ribosomal subunit protein uL16 (170 aa).

Belongs to the universal ribosomal protein uL16 family.

The protein is Large ribosomal subunit protein uL16 of Methanoculleus marisnigri (strain ATCC 35101 / DSM 1498 / JR1).